Reading from the N-terminus, the 1172-residue chain is Structural maintenance of chromosomes protein 2 (1172 aa).

Position 32-39 (32-39) interacts with ATP; that stretch reads GLNGSGKS. Coiled coils occupy residues 172–204 and 258–507; these read RMFEERKEKAFRTMQRKEAKVEEINTLLREEIE and SHIA…AYME. In terms of domain architecture, SMC hinge spans 520–640; it reads SKVKGLVAQL…CDTPESAKKV (121 aa). Residues 676-941 are a coiled coil; the sequence is LLQIQKLNSL…INHLEKENDW (266 aa).

The protein belongs to the SMC family. SMC2 subfamily. As to quaternary structure, forms a heterodimer with cut3/smc4. Component of the condensin complex, which contains the cut3 and cut14 heterodimer, and three non smc subunits that probably regulate the complex: cnd1, cnd2 and cnd3.

It localises to the nucleus. The protein resides in the cytoplasm. Its subcellular location is the chromosome. In terms of biological role, central component of the condensin complex, a complex required for conversion of interphase chromatin into mitotic-like condense chromosomes. The condensin complex probably introduces positive supercoils into relaxed DNA in the presence of type I topoisomerases and converts nicked DNA into positive knotted forms in the presence of type II topoisomerases. This chain is Structural maintenance of chromosomes protein 2 (cut14), found in Schizosaccharomyces pombe (strain 972 / ATCC 24843) (Fission yeast).